A 412-amino-acid polypeptide reads, in one-letter code: Multifunctional CCA protein (412 aa).

Positions 8 and 11 each coordinate ATP. CTP-binding residues include Gly8 and Arg11. Mg(2+) contacts are provided by Asp21 and Asp23. Positions 91, 137, and 140 each coordinate ATP. Arg91, Arg137, and Arg140 together coordinate CTP. An HD domain is found at 228–329; it reads TGIHTLMTLS…VKLFDSIDAW (102 aa).

Belongs to the tRNA nucleotidyltransferase/poly(A) polymerase family. Bacterial CCA-adding enzyme type 1 subfamily. Monomer. Can also form homodimers and oligomers. It depends on Mg(2+) as a cofactor. Requires Ni(2+) as cofactor.

It catalyses the reaction a tRNA precursor + 2 CTP + ATP = a tRNA with a 3' CCA end + 3 diphosphate. The catalysed reaction is a tRNA with a 3' CCA end + 2 CTP + ATP = a tRNA with a 3' CCACCA end + 3 diphosphate. In terms of biological role, catalyzes the addition and repair of the essential 3'-terminal CCA sequence in tRNAs without using a nucleic acid template. Adds these three nucleotides in the order of C, C, and A to the tRNA nucleotide-73, using CTP and ATP as substrates and producing inorganic pyrophosphate. tRNA 3'-terminal CCA addition is required both for tRNA processing and repair. Also involved in tRNA surveillance by mediating tandem CCA addition to generate a CCACCA at the 3' terminus of unstable tRNAs. While stable tRNAs receive only 3'-terminal CCA, unstable tRNAs are marked with CCACCA and rapidly degraded. This is Multifunctional CCA protein from Escherichia coli O139:H28 (strain E24377A / ETEC).